Here is a 417-residue protein sequence, read N- to C-terminus: Actin-like protein 7B (417 aa).

The interval 1–39 (MATKNNPSPKPMGTAQGDPGEAGTLPAPEAGIRDTGSTQ) is disordered. S8 bears the Phosphoserine mark.

It belongs to the actin family.

It localises to the cytoplasm. It is found in the cytoskeleton. The polypeptide is Actin-like protein 7B (Actl7b) (Rattus norvegicus (Rat)).